A 694-amino-acid chain; its full sequence is Frizzled-8 (694 aa).

The signal sequence occupies residues 1-27 (MEWGYLLEVTSLLAALALLQRSSGAAA). At 28-275 (ASAKELACQE…NPFFSQDERA (248 aa)) the chain is on the extracellular side. Residues 30-151 (AKELACQEIT…GNPDTLCMDY (122 aa)) enclose the FZ domain. Disulfide bonds link C35-C96, C43-C89, C80-C118, C107-C148, and C111-C135. Residue N49 is glycosylated (N-linked (GlcNAc...) asparagine). Position 71-78 (71-78 (QFWPLVEI)) interacts with hexadecanoate. Residues 95–100 (ICLEDY) are wnt-binding. The tract at residues 147–152 (LCMDYN) is wnt-binding. N152 carries N-linked (GlcNAc...) asparagine glycosylation. The tract at residues 155 to 226 (DLTTAAPSPP…KARPPGGGAA (72 aa)) is disordered. The segment covering 161–175 (PSPPRRLPPPPPGEQ) has biased composition (pro residues). The segment covering 176–186 (PPSGSGHGRPP) has biased composition (low complexity). Over residues 210 to 225 (RGGGGGGKARPPGGGA) the composition is skewed to gly residues. A helical membrane pass occupies residues 276–296 (FTVFWIGLWSVLCFVSTFATV). Residues 297 to 312 (STFLIDMERFKYPERP) are Cytoplasmic-facing. The chain crosses the membrane as a helical span at residues 313-333 (IIFLSACYLFVSVGYLVRLVA). The Extracellular segment spans residues 334-396 (GHEKVACSGG…RYETTGPALC (63 aa)). Residues 397 to 417 (TVVFLLVYFFGMASSIWWVIL) traverse the membrane as a helical segment. The Cytoplasmic portion of the chain corresponds to 418-439 (SLTWFLAAGMKWGNEAIAGYSQ). Residues 440–460 (YFHLAAWLVPSVKSIAVLALS) form a helical membrane-spanning segment. Over 461–483 (SVDGDPVAGICYVGNQSLDNLRG) the chain is Extracellular. A glycan (N-linked (GlcNAc...) asparagine) is linked at N475. Residues 484 to 504 (FVLAPLVIYLFIGTMFLLAGF) traverse the membrane as a helical segment. The Cytoplasmic portion of the chain corresponds to 505–532 (VSLFRIRSVIKQQDGPTKTHKLEKLMIR). The chain crosses the membrane as a helical span at residues 533–553 (LGLFTVLYTVPAAVVVACLFY). At 554 to 584 (EQHNRPRWEATHNCPCLRDLQPDQARRPDYA) the chain is on the extracellular side. A helical membrane pass occupies residues 585-605 (VFMLKYFMCLVVGITSGVWVW). Residues 606 to 694 (SGKTLESWRS…YPKQMPLSQV (89 aa)) are Cytoplasmic-facing. Positions 608–613 (KTLESW) match the Lys-Thr-X-X-X-Trp motif, mediates interaction with the PDZ domain of Dvl family members motif. Residues 648-664 (GGGGPGGGGGPGGGGGS) show a composition bias toward gly residues. The interval 648 to 668 (GGGGPGGGGGPGGGGGSLYSD) is disordered. The PDZ-binding signature appears at 692 to 694 (SQV).

This sequence belongs to the G-protein coupled receptor Fz/Smo family. In terms of assembly, component of a Wnt-signaling complex that contains a WNT protein, a FZD protein and LRP5 or LRP6. Interacts directly with LRP5 or LRP6; the interaction is promoted by Wnt-binding and signaling and inhibited by DKK1. Interacts with GPOC, RSPO1 and RSPO3. Interacts with glypican GPC3. In terms of processing, ubiquitinated by ZNRF3, leading to its degradation by the proteasome. In terms of tissue distribution, most abundant in fetal kidney, followed by brain and lung. In adult tissues, expressed in kidney, heart, pancreas and skeletal muscle.

It localises to the membrane. It is found in the golgi apparatus. Its subcellular location is the cell membrane. In terms of biological role, receptor for Wnt proteins. Component of the Wnt-Fzd-LRP5-LRP6 complex that triggers beta-catenin signaling through inducing aggregation of receptor-ligand complexes into ribosome-sized signalosomes. The beta-catenin canonical signaling pathway leads to the activation of disheveled proteins, inhibition of GSK-3 kinase, nuclear accumulation of beta-catenin and activation of Wnt target genes. A second signaling pathway involving PKC and calcium fluxes has been seen for some family members, but it is not yet clear if it represents a distinct pathway or if it can be integrated in the canonical pathway, as PKC seems to be required for Wnt-mediated inactivation of GSK-3 kinase. Both pathways seem to involve interactions with G-proteins. May be involved in transduction and intercellular transmission of polarity information during tissue morphogenesis and/or in differentiated tissues. Coreceptor along with RYK of Wnt proteins, such as WNT1. This is Frizzled-8 (FZD8) from Homo sapiens (Human).